We begin with the raw amino-acid sequence, 151 residues long: Large ribosomal subunit protein uL15 (151 aa).

The interval 1 to 60 (MAENNPLKIHNLRPAPGAKTAKTRVGRGEASKGKTAGRGTKGTKARYQVPERFEGGQMPL) is disordered.

It belongs to the universal ribosomal protein uL15 family. As to quaternary structure, part of the 50S ribosomal subunit.

In terms of biological role, binds to the 23S rRNA. The chain is Large ribosomal subunit protein uL15 from Streptomyces coelicolor (strain ATCC BAA-471 / A3(2) / M145).